A 614-amino-acid polypeptide reads, in one-letter code: Bifunctional enzyme CysN/CysC (614 aa).

Residues 1–441 (MTTLLRLATA…SLVTAQDRPP (441 aa)) form a sulfate adenylyltransferase region. The region spanning 2 to 217 (TTLLRLATAG…DVYIAGDRNM (216 aa)) is the tr-type G domain. Residues 11–18 (GSVDDGKS) are G1. Position 11-18 (11-18 (GSVDDGKS)) interacts with GTP. A G2 region spans residues 67-71 (GITID). Residues 88-91 (DTPG) are G3. Residues 88-92 (DTPGH) and 143-146 (NKMD) each bind GTP. Residues 143–146 (NKMD) form a G4 region. Residues 180–182 (SAL) form a G5 region. The adenylyl-sulfate kinase stretch occupies residues 442-614 (RGKTVWFTGL…EVIDLLESSS (173 aa)). 450 to 457 (GLSGSGKS) is an ATP binding site. The Phosphoserine intermediate role is filled by S524. Residues 578-597 (GIDSPYQRPKNPDLRLTPDR) are disordered. Positions 587–597 (KNPDLRLTPDR) are enriched in basic and acidic residues.

This sequence in the C-terminal section; belongs to the APS kinase family. The protein in the N-terminal section; belongs to the TRAFAC class translation factor GTPase superfamily. Classic translation factor GTPase family. CysN/NodQ subfamily. In terms of assembly, heterodimer composed of CysD, the smaller subunit, and CysNC.

It carries out the reaction sulfate + ATP + H(+) = adenosine 5'-phosphosulfate + diphosphate. The catalysed reaction is adenosine 5'-phosphosulfate + ATP = 3'-phosphoadenylyl sulfate + ADP + H(+). It functions in the pathway sulfur metabolism; hydrogen sulfide biosynthesis; sulfite from sulfate: step 1/3. The protein operates within sulfur metabolism; hydrogen sulfide biosynthesis; sulfite from sulfate: step 2/3. Its function is as follows. With CysD forms the ATP sulfurylase (ATPS) that catalyzes the adenylation of sulfate producing adenosine 5'-phosphosulfate (APS) and diphosphate, the first enzymatic step in sulfur assimilation pathway. APS synthesis involves the formation of a high-energy phosphoric-sulfuric acid anhydride bond driven by GTP hydrolysis by CysN coupled to ATP hydrolysis by CysD. In terms of biological role, APS kinase catalyzes the synthesis of activated sulfate. The chain is Bifunctional enzyme CysN/CysC (cysNC) from Mycobacterium tuberculosis (strain CDC 1551 / Oshkosh).